The following is a 301-amino-acid chain: Acidic endochitinase (301 aa).

The first 25 residues, 1–25 (MARTPQSTPLLISLSVLALLQTSYA), serve as a signal peptide directing secretion. Positions 26–301 (GGIAIYWGQN…GYSSSIKSSV (276 aa)) constitute a GH18 domain. Disulfide bonds link Cys-45–Cys-92 and Cys-75–Cys-82. Catalysis depends on Glu-152, which acts as the Proton donor. The cysteines at positions 187 and 216 are disulfide-linked.

Belongs to the glycosyl hydrolase 18 family. Chitinase class II subfamily.

The catalysed reaction is Random endo-hydrolysis of N-acetyl-beta-D-glucosaminide (1-&gt;4)-beta-linkages in chitin and chitodextrins.. In terms of biological role, defense against chitin containing fungal pathogens. The polypeptide is Acidic endochitinase (CHIT3) (Vitis vinifera (Grape)).